The chain runs to 150 residues: S-protein homolog 24 (150 aa).

N-linked (GlcNAc...) asparagine glycosylation occurs at N122.

It belongs to the plant self-incompatibility (S1) protein family.

The protein localises to the secreted. The sequence is that of S-protein homolog 24 from Arabidopsis thaliana (Mouse-ear cress).